Reading from the N-terminus, the 193-residue chain is MPNWGGGKKCGVCQKTVYFAEEVQCEGNSFHKSCFLCMVCKKNLDSTTVAVHGEEIYCKSCYGKKYGPKGYGYGQGAGTLSMDKGESLGIKHEEAPGHRPTTNPNASKFAQKIGGSERCPRCSQAVYAAEKVIGAGKSWHKSCFRCAKCGKGLESTTLADKDGEIYCKGCYAKNFGPKGFGFGQGAGALVHSE.

The region spanning 10 to 61 is the LIM zinc-binding 1 domain; sequence CGVCQKTVYFAEEVQCEGNSFHKSCFLCMVCKKNLDSTTVAVHGEEIYCKSC. The Nuclear localization signal signature appears at 64 to 69; the sequence is KKYGPK. Ser81 is modified (phosphoserine). N6-acetyllysine is present on Lys84. A Glycyl lysine isopeptide (Lys-Gly) (interchain with G-Cter in SUMO2) cross-link involves residue Lys91. Residues Lys112, Lys131, Lys137, and Lys161 each carry the N6-acetyllysine modification. The 52-residue stretch at 119 to 170 folds into the LIM zinc-binding 2 domain; that stretch reads CPRCSQAVYAAEKVIGAGKSWHKSCFRCAKCGKGLESTTLADKDGEIYCKGC. Ser192 is subject to Phosphoserine.

Interacts with ASCC1; ASCC2 and TRIP4.

The protein resides in the nucleus. In terms of biological role, could play a role in neuronal development. In Rattus norvegicus (Rat), this protein is Cysteine and glycine-rich protein 1 (Csrp1).